The following is a 288-amino-acid chain: ATP synthase gamma chain (288 aa).

The protein belongs to the ATPase gamma chain family. F-type ATPases have 2 components, CF(1) - the catalytic core - and CF(0) - the membrane proton channel. CF(1) has five subunits: alpha(3), beta(3), gamma(1), delta(1), epsilon(1). CF(0) has three main subunits: a, b and c.

It localises to the cell inner membrane. Its function is as follows. Produces ATP from ADP in the presence of a proton gradient across the membrane. The gamma chain is believed to be important in regulating ATPase activity and the flow of protons through the CF(0) complex. The chain is ATP synthase gamma chain from Blochmanniella pennsylvanica (strain BPEN).